Reading from the N-terminus, the 297-residue chain is Homoserine kinase (297 aa).

Residue 79 to 89 (PIARGLGSSGA) participates in ATP binding.

The protein belongs to the GHMP kinase family. Homoserine kinase subfamily.

The protein localises to the cytoplasm. The catalysed reaction is L-homoserine + ATP = O-phospho-L-homoserine + ADP + H(+). The protein operates within amino-acid biosynthesis; L-threonine biosynthesis; L-threonine from L-aspartate: step 4/5. In terms of biological role, catalyzes the ATP-dependent phosphorylation of L-homoserine to L-homoserine phosphate. This chain is Homoserine kinase, found in Pyrobaculum aerophilum (strain ATCC 51768 / DSM 7523 / JCM 9630 / CIP 104966 / NBRC 100827 / IM2).